A 451-amino-acid polypeptide reads, in one-letter code: Phosphoglucosamine mutase (451 aa).

Catalysis depends on S102, which acts as the Phosphoserine intermediate. Mg(2+) is bound by residues S102, D244, D246, and D248. S102 carries the post-translational modification Phosphoserine.

It belongs to the phosphohexose mutase family. Mg(2+) serves as cofactor. In terms of processing, activated by phosphorylation.

It carries out the reaction alpha-D-glucosamine 1-phosphate = D-glucosamine 6-phosphate. Its function is as follows. Catalyzes the conversion of glucosamine-6-phosphate to glucosamine-1-phosphate. The chain is Phosphoglucosamine mutase from Lawsonia intracellularis (strain PHE/MN1-00).